A 122-amino-acid chain; its full sequence is Serum amyloid A-2 protein (122 aa).

The first 18 residues, 1 to 18, serve as a signal peptide directing secretion; sequence MKLLSGLLLCSLVLGVSG. Glutamine 19 carries the pyrrolidone carboxylic acid modification. The tract at residues 90–122 is disordered; that stretch reads GAEDSMADQAANEWGRSGKDPNHFRPKGLPDKY. Basic and acidic residues predominate over residues 105-122; sequence RSGKDPNHFRPKGLPDKY.

The protein belongs to the SAA family. In terms of assembly, apolipoprotein of the HDL complex. Expressed by the liver; secreted in plasma.

Its subcellular location is the secreted. In terms of biological role, major acute phase reactant. This is Serum amyloid A-2 protein (SAA2) from Oryctolagus cuniculus (Rabbit).